Here is a 435-residue protein sequence, read N- to C-terminus: Adenylosuccinate synthetase (435 aa).

GTP is bound by residues 13 to 19 (GDEGKGK) and 41 to 43 (GHT). The active-site Proton acceptor is D14. Mg(2+) contacts are provided by D14 and G41. Residues 14–17 (DEGK), 39–42 (NAGH), T130, R144, Q225, T240, and R304 each bind IMP. Residue H42 is the Proton donor of the active site. 300–306 (ATTGRPR) is a substrate binding site. GTP is bound by residues R306, 332-334 (KLD), and 419-421 (STG).

The protein belongs to the adenylosuccinate synthetase family. As to quaternary structure, homodimer. Requires Mg(2+) as cofactor.

Its subcellular location is the cytoplasm. The catalysed reaction is IMP + L-aspartate + GTP = N(6)-(1,2-dicarboxyethyl)-AMP + GDP + phosphate + 2 H(+). The protein operates within purine metabolism; AMP biosynthesis via de novo pathway; AMP from IMP: step 1/2. Plays an important role in the de novo pathway of purine nucleotide biosynthesis. Catalyzes the first committed step in the biosynthesis of AMP from IMP. This is Adenylosuccinate synthetase from Nitrosospira multiformis (strain ATCC 25196 / NCIMB 11849 / C 71).